A 516-amino-acid polypeptide reads, in one-letter code: Probable serine/threonine-protein kinase ECU02_0550 (516 aa).

In terms of domain architecture, Protein kinase spans 4 to 230 (YKLRQVIGEG…ASEALMHRSF (227 aa)). ATP contacts are provided by residues 10–18 (IGEGASSTV) and lysine 32. Aspartate 120 serves as the catalytic Proton acceptor.

The protein belongs to the protein kinase superfamily. CAMK Ser/Thr protein kinase family.

The enzyme catalyses L-seryl-[protein] + ATP = O-phospho-L-seryl-[protein] + ADP + H(+). It catalyses the reaction L-threonyl-[protein] + ATP = O-phospho-L-threonyl-[protein] + ADP + H(+). This chain is Probable serine/threonine-protein kinase ECU02_0550, found in Encephalitozoon cuniculi (strain GB-M1) (Microsporidian parasite).